The chain runs to 927 residues: Sodium/calcium exchanger 3 (927 aa).

The signal sequence occupies residues 1–30 (MAWLRLQPLTSAFLHFGLVTFVLFLNGLRA). The Extracellular segment spans residues 31–73 (EAGDLRDVPSAGQNNESCSGSSDCKEGVILPIWYPENPSLGDK). Residue Asn45 is glycosylated (N-linked (GlcNAc...) asparagine). A helical membrane pass occupies residues 74–94 (IARVIVYFVALIYMFLGVSII). Over 95 to 147 (ADRFMASIEVITSQEREVTIKKPNGETSTTTIRVWNETVSNLTLMALGSSAPE) the chain is Cytoplasmic. The Alpha-1 repeat unit spans residues 140–180 (ALGSSAPEILLSLIEVCGHGFIAGDLGPSTIVGSAAFNMFI). A helical transmembrane segment spans residues 148–168 (ILLSLIEVCGHGFIAGDLGPS). Position 169 (Thr169) is a topological domain, extracellular. A helical transmembrane segment spans residues 170 to 190 (IVGSAAFNMFIIIGICVYVIP). The Cytoplasmic portion of the chain corresponds to 191–202 (DGETRKIKHLRV). Residues 203 to 223 (FFVTAAWSVFAYIWLYMILAV) form a helical membrane-spanning segment. Over 224-230 (FSPGVVQ) the chain is Extracellular. The helical transmembrane segment at 231–251 (VWEGLLTLFFFPVCVLLAWVA) threads the bilayer. At 252-726 (DKRLLFYKYM…DESGEERLPS (475 aa)) the chain is on the cytoplasmic side. A putative calmodulin-binding region region spans residues 253-272 (KRLLFYKYMHKRYRTDKHRG). Calx-beta domains are found at residues 386–485 (VHTD…VRLS) and 519–619 (ATVT…IALG). Residues Glu409, Asp445, Asp470, Asp471, Ile473, Glu475, Glu478, Asp525, Asp526, Asp527, Glu543, Asp579, Glu606, Glu607, and Glu672 each coordinate Ca(2+). A helical membrane pass occupies residues 727-747 (CFDYVMHFLTVFWKVLFACVP). At 748 to 754 (PTEYCHG) the chain is on the extracellular side. A helical transmembrane segment spans residues 755-775 (WACFVVSILIIGMLTAIIGDL). Residues 776–778 (ASH) are Cytoplasmic-facing. A helical transmembrane segment spans residues 779 to 799 (FGCTIGLKDSVTAVVFVAFGT). An Alpha-2 repeat occupies 796-832 (AFGTSVPDTFASKAAALQDVYADASIGNVTGSNAVNV). Residues 800–828 (SVPDTFASKAAALQDVYADASIGNVTGSN) lie on the Extracellular side of the membrane. The N-linked (GlcNAc...) asparagine glycan is linked to Asn823. A helical transmembrane segment spans residues 829–849 (AVNVFLGIGLAWSVAAIYWAM). Topologically, residues 850 to 860 (QGQEFHVSAGT) are cytoplasmic. A helical membrane pass occupies residues 861 to 881 (LAFSVTLFTIFAFVCLSVLLY). Residues 882 to 903 (RRRPHLGGELGGPRGCKLATTW) lie on the Extracellular side of the membrane. Residues 904–924 (LFVSLWLLYVLFATLEAYCYI) traverse the membrane as a helical segment. The Cytoplasmic portion of the chain corresponds to 925 to 927 (KGF).

It belongs to the Ca(2+):cation antiporter (CaCA) (TC 2.A.19) family. SLC8 subfamily. In terms of assembly, interacts with AKAP1. Detected in neurons in brain cortex and hippocampus. Detected in pyramidal cell bodies and processes, in granule cells and interneurons in the CA1 and CA3 region of the hippocampus. Detected on astrocyte processes in brain cortex. Detected on endothelial cells in hippocampus capillaries (at protein level). Restricted to brain and skeletal muscle.

It is found in the cell membrane. The protein resides in the perikaryon. Its subcellular location is the cell projection. It localises to the dendrite. The protein localises to the dendritic spine. It is found in the sarcolemma. The protein resides in the cytoplasm. Its subcellular location is the sarcoplasm. It localises to the cell junction. The protein localises to the mitochondrion outer membrane. It is found in the endoplasmic reticulum membrane. The protein resides in the perinuclear region. The enzyme catalyses Ca(2+)(in) + 3 Na(+)(out) = Ca(2+)(out) + 3 Na(+)(in). With respect to regulation, calcium transport is down-regulated by Na(+) and stimulated by Ca(2+). In terms of biological role, mediates the electrogenic exchange of Ca(2+) against Na(+) ions across the cell membrane, and thereby contributes to the regulation of cytoplasmic Ca(2+) levels and Ca(2+)-dependent cellular processes. Contributes to cellular Ca(2+) homeostasis in excitable cells, both in muscle and in brain. In a first phase, voltage-gated channels mediate the rapid increase of cytoplasmic Ca(2+) levels due to release of Ca(2+) stores from the endoplasmic reticulum. SLC8A3 mediates the export of Ca(2+) from the cell during the next phase, so that cytoplasmic Ca(2+) levels rapidly return to baseline. Contributes to Ca(2+) transport during excitation-contraction coupling in muscle. In neurons, contributes to the rapid decrease of cytoplasmic Ca(2+) levels back to baseline after neuronal activation, and thereby contributes to modulate synaptic plasticity, learning and memory. Required for normal oligodendrocyte differentiation and for normal myelination. Mediates Ca(2+) efflux from mitochondria and contributes to mitochondrial Ca(2+) ion homeostasis. The polypeptide is Sodium/calcium exchanger 3 (Slc8a3) (Rattus norvegicus (Rat)).